The chain runs to 2093 residues: Nuclear-pore anchor (2093 aa).

4 coiled-coil regions span residues 57–362 (LEQK…TDEL), 439–529 (MILQ…RDVQ), 570–627 (DING…RAEE), and 688–1172 (QEKA…LEAK). A disordered region spans residues 1175 to 1198 (NSAEKNSRSGTISSGSTDSDHLED). Residues 1182 to 1191 (RSGTISSGST) are compositionally biased toward low complexity. Coiled-coil stretches lie at residues 1208–1252 (LRRT…AERA) and 1293–1585 (EKCQ…LKHA). Disordered regions lie at residues 1453 to 1489 (YEKEKDELSKQNQSLAKQLEEAKEEAGKRTTTDAVVE), 1525 to 1555 (KKDEELTKERSERKSVEKEVGDSLTKIKKEK), and 1627 to 2093 (SNSQ…PSPP). A compositionally biased stretch (basic and acidic residues) spans 1470-1483 (QLEEAKEEAGKRTT). Residues 1652–1674 (STMTRVPSSTPLIKSPVATTQQL) show a composition bias toward polar residues. 2 stretches are compositionally biased toward basic and acidic residues: residues 1710-1719 (KPEESPKVDV) and 1729-1740 (DEGKQPAAHEPE). The segment covering 1764 to 1779 (SEPQQDSLTQGETSSE) has biased composition (polar residues). The span at 1789–1808 (KGSESHPDTSEGENLAKEPA) shows a compositional bias: basic and acidic residues. Residues 1818–1849 (TTDGDNEETEAENAEEKTEEYVEAQQDNEADE) adopt a coiled-coil conformation. Composition is skewed to acidic residues over residues 1821–1830 (GDNEETEAEN) and 1838–1903 (YVEA…EEGT). Polar residues predominate over residues 1921 to 1931 (TLATPTQSPSR). Acidic residues predominate over residues 1935–1963 (AMEEAETTIETPVEDDKTDEGGDAAEEAA). The span at 1984 to 2009 (TSAATTSPVSTAPTTSSTLASAITSS) shows a compositional bias: low complexity. Position 2022 is a phosphoserine (Ser-2022).

Part of the nuclear pore complex (NPC). The NPC has an eight-fold symmetrical structure comprising a central transport channel and two rings, the cytoplasmic and nuclear rings, to which eight filaments are attached. The cytoplasmic filaments have loose ends, while the nuclear filaments are joined in a distal ring, forming a nuclear basket. NPCs are highly dynamic in configuration and composition, and can be devided in 3 subcomplexes, the NUP62 subcomplex, the NUP107-160 subcomplex and the NUP93 subcomplex, containing approximately 30 different nucleoporin proteins. Interacts with MAD1 and (via N-terminus) with ESD4. As to expression, ubiquitous. Highest expression in the shoot apical region.

It is found in the nucleus envelope. It localises to the nucleus membrane. Its subcellular location is the nucleus. The protein resides in the nuclear pore complex. Component of the nuclear pore complex. Acts as a docking site for activities required for desumoylation and mRNA export. Required for the proper expression or localization of a subset of miRNAs. Plays a role in meristematic cell division by interacting with spindle assembly checkpoint proteins. In Arabidopsis thaliana (Mouse-ear cress), this protein is Nuclear-pore anchor.